The sequence spans 251 residues: Probable transcriptional regulatory protein Swol_1435 (251 aa).

The segment at 1–23 (MAGHSKWANIKHKKARSDEKRGK) is disordered.

Belongs to the TACO1 family.

The protein localises to the cytoplasm. The sequence is that of Probable transcriptional regulatory protein Swol_1435 from Syntrophomonas wolfei subsp. wolfei (strain DSM 2245B / Goettingen).